Consider the following 458-residue polypeptide: ATP synthase subunit beta (458 aa).

Position 148–155 (148–155 (GGAGVGKT)) interacts with ATP.

It belongs to the ATPase alpha/beta chains family. F-type ATPases have 2 components, CF(1) - the catalytic core - and CF(0) - the membrane proton channel. CF(1) has five subunits: alpha(3), beta(3), gamma(1), delta(1), epsilon(1). CF(0) has three main subunits: a(1), b(2) and c(9-12). The alpha and beta chains form an alternating ring which encloses part of the gamma chain. CF(1) is attached to CF(0) by a central stalk formed by the gamma and epsilon chains, while a peripheral stalk is formed by the delta and b chains.

It localises to the cell inner membrane. It catalyses the reaction ATP + H2O + 4 H(+)(in) = ADP + phosphate + 5 H(+)(out). Produces ATP from ADP in the presence of a proton gradient across the membrane. The catalytic sites are hosted primarily by the beta subunits. The polypeptide is ATP synthase subunit beta (Nitrosococcus oceani (strain ATCC 19707 / BCRC 17464 / JCM 30415 / NCIMB 11848 / C-107)).